Here is a 225-residue protein sequence, read N- to C-terminus: PKHD-type hydroxylase YbiX (225 aa).

The 100-residue stretch at 78-177 (TLSTPLFNRY…RVASFMWIQS (100 aa)) folds into the Fe2OG dioxygenase domain. The Fe cation site is built by His-96, Asp-98, and His-158. Arg-168 serves as a coordination point for 2-oxoglutarate.

Requires Fe(2+) as cofactor. L-ascorbate is required as a cofactor.

This Shigella boydii serotype 18 (strain CDC 3083-94 / BS512) protein is PKHD-type hydroxylase YbiX.